The sequence spans 279 residues: Syntaxin-21 (279 aa).

The disordered stretch occupies residues Met-1–Gln-34. Residue Ser-2 is modified to N-acetylserine. Residues Ser-2–Leu-258 are Cytoplasmic-facing. Over residues Gly-21–Asp-31 the composition is skewed to polar residues. Residues Glu-65–Ala-94 adopt a coiled-coil conformation. Positions Glu-186–Ala-248 constitute a t-SNARE coiled-coil homology domain. A helical; Anchor for type IV membrane protein transmembrane segment spans residues Thr-259–Val-279.

The protein belongs to the syntaxin family. In terms of assembly, interacts with VTI11 and SYP51 to form a t-SNARE complex and with alpha-SNAP to form a 20S complex. As to expression, a high level expression is seen in the roots while a low level expression is seen in the leaves.

The protein localises to the prevacuolar compartment membrane. May function in the docking or fusion of transport vesicles with the prevacuolar membrane. The polypeptide is Syntaxin-21 (SYP21) (Arabidopsis thaliana (Mouse-ear cress)).